Reading from the N-terminus, the 494-residue chain is Histidine--tRNA ligase (494 aa).

It belongs to the class-II aminoacyl-tRNA synthetase family. As to quaternary structure, homodimer.

The protein localises to the cytoplasm. The enzyme catalyses tRNA(His) + L-histidine + ATP = L-histidyl-tRNA(His) + AMP + diphosphate + H(+). In Cereibacter sphaeroides (strain ATCC 17023 / DSM 158 / JCM 6121 / CCUG 31486 / LMG 2827 / NBRC 12203 / NCIMB 8253 / ATH 2.4.1.) (Rhodobacter sphaeroides), this protein is Histidine--tRNA ligase.